Here is a 248-residue protein sequence, read N- to C-terminus: UPF0173 metal-dependent hydrolase Hlac_1347 (248 aa).

Belongs to the UPF0173 family.

The polypeptide is UPF0173 metal-dependent hydrolase Hlac_1347 (Halorubrum lacusprofundi (strain ATCC 49239 / DSM 5036 / JCM 8891 / ACAM 34)).